We begin with the raw amino-acid sequence, 343 residues long: MAEKKGPEAKKQKKMKNKSKVEETDAGEEAGASEEQQQVTRLPPAFSLSEIKNKQRRQFMFIKLKQEKRKEKLILRKKRKKEREALGDKAPPKPVPKTIENQRVYDETTVDPADEEVALDEATDEFAPYFNKQTTPKILITTSDRPRGRSVRFTEQLSSIIPNSDVYYRRGLALKKIIPQCVSRDYTDLLVINEDRKVPNGLVLCHLPDGPTAHFKISNVRLRKEMKRKGKEPTEHKPEVILNNFTTRLGHSIGRMFASLYPHDPHFVGRQVATFHNQRDYIFFRYHRYLFKSEKKVGIQELGPRFTLKLRSLQKGTFDSKYGEYEWVHKRHEMDTSRRKFHL.

2 stretches are compositionally biased toward basic and acidic residues: residues 1-10 (MAEKKGPEAK) and 82-91 (EREALGDKAP). 2 disordered regions span residues 1–51 (MAEK…LSEI) and 77–97 (KKRK…PVPK). Positions 136–319 (PKILITTSDR…LRSLQKGTFD (184 aa)) constitute a Brix domain. Residues 297-314 (VGIQELGPRFTLKLRSLQ) form an RNA-binding region.

It is found in the nucleus. The protein resides in the nucleolus. In terms of biological role, may be required for ribosome biogenesis. The polypeptide is Ribosome production factor 1 (rpf1) (Xenopus laevis (African clawed frog)).